The sequence spans 412 residues: uncharacterized protein (412 aa).

Histidine 49 lines the Zn(2+) pocket. Glutamate 52 serves as the catalytic Proton acceptor. Residues histidine 53 and glutamate 129 each contribute to the Zn(2+) site.

Belongs to the peptidase M16 family. It depends on Zn(2+) as a cofactor.

This is an uncharacterized protein from Rickettsia typhi (strain ATCC VR-144 / Wilmington).